Consider the following 345-residue polypeptide: MAETDSFLHLARPLGPVAVGSAPTTAPLNVVIQPQAIFSILDHSLRRNADQERVIGTLLGTRSEDGTEVEIRSTFAVGHTETTDQVEVDMEYQKQMLALHLKANPKEVLVGWYATSSELNTFSALIQNFYSGQGDGTWPHPAVHLTVSTEPGKDIETRAYISAPVGVTAERAADSAAFIPVPYEIRYGEAEKSGLEAIASAKDAESRATNIFTDIEALERAIEEVLGMIDRVSRYVESVIDEEAPASTALGQFLLNALALAPKVEPADIERDFNNHIQDVLVVSYLANTIRTQMELSNRLATAQLTLGGEGASAEAGAQRGQRGGKGGRGGQQRTQERASEEVRA.

An MPN domain is found at 30–166 (VVIQPQAIFS…TRAYISAPVG (137 aa)). The segment at 310 to 345 (EGASAEAGAQRGQRGGKGGRGGQQRTQERASEEVRA) is disordered. Low complexity predominate over residues 312–321 (ASAEAGAQRG). Positions 322–331 (QRGGKGGRGG) are enriched in gly residues. Positions 335–345 (TQERASEEVRA) are enriched in basic and acidic residues.

The protein belongs to the eIF-3 subunit F family. Component of the eukaryotic translation initiation factor 3 (eIF-3) complex.

Its subcellular location is the cytoplasm. Functionally, component of the eukaryotic translation initiation factor 3 (eIF-3) complex, which is involved in protein synthesis of a specialized repertoire of mRNAs and, together with other initiation factors, stimulates binding of mRNA and methionyl-tRNAi to the 40S ribosome. The eIF-3 complex specifically targets and initiates translation of a subset of mRNAs involved in cell proliferation. The polypeptide is Eukaryotic translation initiation factor 3 subunit F (Aspergillus fumigatus (strain CBS 144.89 / FGSC A1163 / CEA10) (Neosartorya fumigata)).